Reading from the N-terminus, the 280-residue chain is MANKVKAEIGVIGGSGFYSFLDDVTEVRVDTPYGPPSDSLFLGEVAGRRVAFLPRHGRGHHLPPHRINYRANLWALRSVGARQVLGPCAVGGLRPEYGPGTLLVPDQFVDRTRSRPSTYFDGLPMPDGTVPNVVHVSLADPYCPTGRAAALKAARGREWEPVDGGTLVVVEGPRFGTRAESLWHRAQGWSVVGMTGHPEAALARELELCYTSLTLVTDLDAGAESGEGVSHEEVLRVFAANVDRLRGVLFDAVAALPASGERDCPCGAALGGMDPGIALP.

Phosphate is bound by residues Ser15 and 55 to 56 (RH). Residue Met194 participates in substrate binding. Position 195 (Thr195) interacts with phosphate. Residue 218–220 (DLD) coordinates substrate.

The protein belongs to the PNP/MTAP phosphorylase family. MTAP subfamily. As to quaternary structure, homohexamer. Dimer of a homotrimer.

The enzyme catalyses a purine D-ribonucleoside + phosphate = a purine nucleobase + alpha-D-ribose 1-phosphate. It participates in purine metabolism; purine nucleoside salvage. Its function is as follows. Purine nucleoside phosphorylase involved in purine salvage. The chain is Purine nucleoside phosphorylase from Streptomyces coelicolor (strain ATCC BAA-471 / A3(2) / M145).